Reading from the N-terminus, the 180-residue chain is Beta-lactoglobulin-1/B (180 aa).

The signal sequence occupies residues 1 to 18; sequence MKCLLLALGLALACGVQA. Cystine bridges form between Cys-84–Cys-178, Cys-124–Cys-137, and Cys-124–Cys-139.

The protein belongs to the calycin superfamily. Lipocalin family. In terms of assembly, under physiological conditions beta-lactoglobulin exists as an equilibrium mixture of monomeric and dimeric forms. In terms of processing, alternate disulfide bonds occur in equal amounts.

Its subcellular location is the secreted. In terms of biological role, lactoglobulin is the primary component of whey, it binds retinol and is probably involved in the transport of that molecule. The sequence is that of Beta-lactoglobulin-1/B from Ovis aries (Sheep).